The following is a 589-amino-acid chain: Polypeptide N-acetylgalactosaminyltransferase 4 (589 aa).

Topologically, residues 1–11 (MLPRMLKMKTV) are cytoplasmic. The helical; Signal-anchor for type II membrane protein transmembrane segment at 12–31 (GTVLAVIWLFGLAFIYVQST) threads the bilayer. The Lumenal segment spans residues 32-589 (SSSLRPPGRH…WIFEKLDTYE (558 aa)). The tract at residues 33 to 73 (SSLRPPGRHPPPLPQLDPLIPQNPPQNDEIRPKKSAPPIPT) is disordered. Intrachain disulfides connect Cys140–Cys369, Cys360–Cys438, Cys471–Cys488, Cys514–Cys531, and Cys553–Cys571. The interval 150–255 (MQPTTVIITY…QKWLEPLLAR (106 aa)) is catalytic subdomain A. Substrate contacts are provided by Asp191 and Arg216. Asp239 contacts Mn(2+). Position 240 (Ser240) interacts with substrate. Residue His241 participates in Mn(2+) binding. The tract at residues 315–377 (PIRSPTMAGG…PCSRVGHVFR (63 aa)) is catalytic subdomain B. Trp346 serves as a coordination point for substrate. Residue His374 participates in Mn(2+) binding. Residues Arg377, His380, and Tyr382 each coordinate substrate. Positions 458–589 (TPGKSFQMKI…WIFEKLDTYE (132 aa)) constitute a Ricin B-type lectin domain. Asn523 carries N-linked (GlcNAc...) asparagine glycosylation.

Belongs to the glycosyltransferase 2 family. GalNAc-T subfamily. Requires Mn(2+) as cofactor.

The protein localises to the golgi apparatus membrane. The enzyme catalyses L-seryl-[protein] + UDP-N-acetyl-alpha-D-galactosamine = a 3-O-[N-acetyl-alpha-D-galactosaminyl]-L-seryl-[protein] + UDP + H(+). It catalyses the reaction L-threonyl-[protein] + UDP-N-acetyl-alpha-D-galactosamine = a 3-O-[N-acetyl-alpha-D-galactosaminyl]-L-threonyl-[protein] + UDP + H(+). The protein operates within protein modification; protein glycosylation. Catalyzes the initial reaction in O-linked oligosaccharide biosynthesis, the transfer of an N-acetyl-D-galactosamine residue to a serine or threonine residue on the protein receptor. This is Polypeptide N-acetylgalactosaminyltransferase 4 (gly-4) from Caenorhabditis elegans.